The primary structure comprises 489 residues: NF-kappa-B inhibitor cactus (489 aa).

A compositionally biased stretch (low complexity) spans 1 to 26; sequence MPSPTKAAEAATKATATSDCSCSAAS. Disordered stretches follow at residues 1 to 138 and 163 to 203; these read MPSP…SMRL and NNLG…APPS. Phosphoserine; by PKC is present on Ser45. Residues 69-86 are compositionally biased toward polar residues; it reads NETSDSGFISGPQSSQIC. Ser135 is subject to Phosphoserine; by PKC. The span at 163-180 shows a compositional bias: polar residues; that stretch reads NNLGQSSSTQITGRSKFQ. Phosphothreonine; by PKC is present on Thr174. Positions 181–203 are enriched in low complexity; sequence SSTASTANANPSGXGATSSAPPS. ANK repeat units lie at residues 220-252, 256-285, 287-316, 350-379, and 384-413; these read DGDT…LLNI, VAQT…EVRD, HGNT…ATEI, DGER…DINA, and SGRT…KLNL. Position 308 is a phosphothreonine; by PKC (Thr308). Ser384 is subject to Phosphoserine; by PKC.

Its subcellular location is the cytoplasm. Its function is as follows. Involved in the formation of the dorsoventral pattern. It inhibits nuclear translocation of the dorsal morphogen in the dorsal region of the embryo. This chain is NF-kappa-B inhibitor cactus (cact), found in Drosophila yakuba (Fruit fly).